Consider the following 132-residue polypeptide: Small ribosomal subunit protein uS8 (132 aa).

Belongs to the universal ribosomal protein uS8 family. Part of the 30S ribosomal subunit. Contacts proteins S5 and S12.

In terms of biological role, one of the primary rRNA binding proteins, it binds directly to 16S rRNA central domain where it helps coordinate assembly of the platform of the 30S subunit. The protein is Small ribosomal subunit protein uS8 of Acetivibrio thermocellus (strain ATCC 27405 / DSM 1237 / JCM 9322 / NBRC 103400 / NCIMB 10682 / NRRL B-4536 / VPI 7372) (Clostridium thermocellum).